Consider the following 528-residue polypeptide: GMP synthase [glutamine-hydrolyzing] (528 aa).

One can recognise a Glutamine amidotransferase type-1 domain in the interval Lys-3–Asp-199. Residue Cys-83 is the Nucleophile of the active site. Active-site residues include His-174 and Glu-176. The GMPS ATP-PPase domain occupies Trp-200–Arg-394. Ser-227–Ser-233 is an ATP binding site.

In terms of assembly, homodimer.

It catalyses the reaction XMP + L-glutamine + ATP + H2O = GMP + L-glutamate + AMP + diphosphate + 2 H(+). The protein operates within purine metabolism; GMP biosynthesis; GMP from XMP (L-Gln route): step 1/1. Catalyzes the synthesis of GMP from XMP. The chain is GMP synthase [glutamine-hydrolyzing] from Ehrlichia ruminantium (strain Welgevonden).